We begin with the raw amino-acid sequence, 396 residues long: Elongation factor Tu (396 aa).

Residues 11-205 (KPHVNIGTIG…VVDEYIPTPK (195 aa)) enclose the tr-type G domain. Residues 20 to 27 (GHVDHGKT) form a G1 region. 20 to 27 (GHVDHGKT) contributes to the GTP binding site. Thr-27 serves as a coordination point for Mg(2+). The interval 61 to 65 (GITIN) is G2. The segment at 82–85 (DAPG) is G3. GTP is bound by residues 82–86 (DAPGH) and 137–140 (NKTD). Residues 137–140 (NKTD) are G4. Residues 175–177 (SAL) form a G5 region.

The protein belongs to the TRAFAC class translation factor GTPase superfamily. Classic translation factor GTPase family. EF-Tu/EF-1A subfamily. Monomer.

The protein resides in the cytoplasm. It carries out the reaction GTP + H2O = GDP + phosphate + H(+). Its function is as follows. GTP hydrolase that promotes the GTP-dependent binding of aminoacyl-tRNA to the A-site of ribosomes during protein biosynthesis. This is Elongation factor Tu from Limosilactobacillus fermentum (strain NBRC 3956 / LMG 18251) (Lactobacillus fermentum).